The chain runs to 225 residues: 7-cyano-7-deazaguanine synthase (225 aa).

10 to 20 lines the ATP pocket; the sequence is LSGGIDSATAA. Residues cysteine 191, cysteine 199, cysteine 202, and cysteine 205 each coordinate Zn(2+).

The protein belongs to the QueC family. Zn(2+) serves as cofactor.

The enzyme catalyses 7-carboxy-7-deazaguanine + NH4(+) + ATP = 7-cyano-7-deazaguanine + ADP + phosphate + H2O + H(+). It participates in purine metabolism; 7-cyano-7-deazaguanine biosynthesis. Functionally, catalyzes the ATP-dependent conversion of 7-carboxy-7-deazaguanine (CDG) to 7-cyano-7-deazaguanine (preQ(0)). This Prochlorococcus marinus (strain NATL2A) protein is 7-cyano-7-deazaguanine synthase.